A 480-amino-acid polypeptide reads, in one-letter code: Adenylosuccinate synthetase, chloroplastic (480 aa).

A chloroplast-targeting transit peptide spans 1 to 54 (MATARVMVADRARAFGGTTATRARRDDQGRRVTIARGIPSRARVVVARASERAY). Residues 69-75 (GDEGKGK) and 97-99 (GHT) contribute to the GTP site. The Proton acceptor role is filled by aspartate 70. Mg(2+) contacts are provided by aspartate 70 and glycine 97. Residues 70–73 (DEGK), 95–98 (NAGH), threonine 187, arginine 201, asparagine 278, threonine 293, and arginine 357 contribute to the IMP site. Catalysis depends on histidine 98, which acts as the Proton donor. 353–359 (TTTGRPR) provides a ligand contact to substrate. GTP-binding positions include arginine 359, 385–387 (KLD), and 468–470 (GVG).

It belongs to the adenylosuccinate synthetase family. Homodimer. Mg(2+) is required as a cofactor.

The protein resides in the plastid. It localises to the chloroplast. The enzyme catalyses IMP + L-aspartate + GTP = N(6)-(1,2-dicarboxyethyl)-AMP + GDP + phosphate + 2 H(+). The protein operates within purine metabolism; AMP biosynthesis via de novo pathway; AMP from IMP: step 1/2. Its function is as follows. Plays an important role in the de novo pathway and in the salvage pathway of purine nucleotide biosynthesis. Catalyzes the first committed step in the biosynthesis of AMP from IMP. This chain is Adenylosuccinate synthetase, chloroplastic, found in Ostreococcus tauri.